The sequence spans 149 residues: uncharacterized protein (149 aa).

A compositionally biased stretch (basic and acidic residues) spans 130–144 (ESNVTKENIEIKEEK). The disordered stretch occupies residues 130 to 149 (ESNVTKENIEIKEEKEENSE).

This is an uncharacterized protein from Methanocaldococcus jannaschii (strain ATCC 43067 / DSM 2661 / JAL-1 / JCM 10045 / NBRC 100440) (Methanococcus jannaschii).